The following is an 82-amino-acid chain: UPF0298 protein SPCG_0698 (82 aa).

The protein belongs to the UPF0298 family.

It is found in the cytoplasm. The polypeptide is UPF0298 protein SPCG_0698 (Streptococcus pneumoniae (strain CGSP14)).